Consider the following 276-residue polypeptide: MARQYAVWGNPIAHSKSPYIHQLFAQQSNRRIEYAAKLGDKIAFEKQLVQFFTDGANGVNITSPFKARAFRLADVCSESCLLAGAANTLKRLDDGRLFADNTDGKGFCADLARLEWLIPEQRVLILGAGGVTKGVLLPLLLAKQKVTLSNRTHIKAVELAQQFAKYGDIQAVSLSEIVQHPPFDLIINATSLGLQGGYIALPNHLFEKSAVYDMEYASNMCTPFLNYVRTQGVTRYQDGLGMLVNQAAFSFQLWEGELPKVENVLKQLRAEMGYVK.

Residues serine 15 to serine 17 and threonine 62 each bind shikimate. Lysine 66 functions as the Proton acceptor in the catalytic mechanism. Glutamate 78 lines the NADP(+) pocket. Shikimate is bound by residues asparagine 87 and aspartate 103. NADP(+) contacts are provided by residues glycine 127–valine 131, asparagine 150–lysine 155, and methionine 214. Tyrosine 216 contacts shikimate. Glycine 239 contributes to the NADP(+) binding site.

The protein belongs to the shikimate dehydrogenase family. In terms of assembly, homodimer.

It catalyses the reaction shikimate + NADP(+) = 3-dehydroshikimate + NADPH + H(+). The protein operates within metabolic intermediate biosynthesis; chorismate biosynthesis; chorismate from D-erythrose 4-phosphate and phosphoenolpyruvate: step 4/7. Functionally, involved in the biosynthesis of the chorismate, which leads to the biosynthesis of aromatic amino acids. Catalyzes the reversible NADPH linked reduction of 3-dehydroshikimate (DHSA) to yield shikimate (SA). The sequence is that of Shikimate dehydrogenase (NADP(+)) from Haemophilus ducreyi (strain 35000HP / ATCC 700724).